A 619-amino-acid chain; its full sequence is Cationic amino acid transporter 3 (619 aa).

The Cytoplasmic portion of the chain corresponds to 1–36 (MLWQALRRFGQKLVRRRLLELGMGETRLARCLSTLD). A helical transmembrane segment spans residues 37–57 (LVALGVGSTLGAGVYVLAGEV). The Extracellular portion of the chain corresponds to 58–61 (AKEK). The helical transmembrane segment at 62–82 (AGPSIVICFLVAALSSVLAGL) threads the bilayer. The Cytoplasmic portion of the chain corresponds to 83–107 (CYAEFGARVPGSGSAYLYSYVTVGE). The helical transmembrane segment at 108–128 (LWAFTTGWNLILSYVIGTASV) threads the bilayer. At 129-162 (ARAWSSAFDNLIGNHISQTLKGTILLNMPHVLAE) the chain is on the extracellular side. The helical transmembrane segment at 163 to 183 (YPDFFALALVLLLTGLLVLGA) threads the bilayer. Topologically, residues 184–191 (NESGLVTK) are cytoplasmic. The helical transmembrane segment at 192-212 (VFTGMNLLVLGFVIISGFIKG) threads the bilayer. Residues 213-244 (ELRNWKLTKEDYCLTMSESNGTCSLDSMGSGG) are Extracellular-facing. An N-linked (GlcNAc...) asparagine glycan is attached at asparagine 232. Residues 245 to 265 (FMPFGLEGILRGAATCFYAFV) form a helical membrane-spanning segment. Residues 266-285 (GFDCIATTGEEAQNPQRSIP) are Cytoplasmic-facing. Residues 286 to 306 (MGIVISLSICFLAYFGVSSAL) traverse the membrane as a helical segment. The Extracellular portion of the chain corresponds to 307–335 (TLMMPYYKLQPESPLPEAFTYVGWEPARY). Residues 336–356 (LVAIGSLCALSTSLLGSMFPM) form a helical membrane-spanning segment. The Cytoplasmic segment spans residues 357-382 (PRVIYAMAEDGLLFRVLARVHNGTHT). The helical transmembrane segment at 383–403 (PIVATVVSGVIAAFMAFLFEL) threads the bilayer. Topologically, residues 404 to 406 (TDL) are extracellular. A helical membrane pass occupies residues 407–427 (VDLMSIGTLLAYSLVSICVLI). The Cytoplasmic segment spans residues 428–475 (LRYQPDQEMKNGEEEVELQEERTLEAEKLTVQALFCQVDSIPTLLSGR). Residues 476–496 (IVYVCSSLLAVLLTVLCLVLT) traverse the membrane as a helical segment. Residues 497–507 (WWTTPLHSGDP) are Extracellular-facing. Residues 508-528 (VWVTVVVLILGLILGISGVIW) traverse the membrane as a helical segment. Over 529-540 (RQPQNRTPLHFK) the chain is Cytoplasmic. The chain crosses the membrane as a helical span at residues 541–561 (VPVVPLLPLVSIFVNVYLMMQ). The Extracellular portion of the chain corresponds to 562–569 (MTADTWAR). Residues 570 to 590 (FGVWMLIGFAIYFGYGIQHSV) form a helical membrane-spanning segment. Over 591-619 (EEVKNHQTLPKTRPQTIDLDLTTSCVHSI) the chain is Cytoplasmic. At threonine 606 the chain carries Phosphothreonine. At serine 618 the chain carries Phosphoserine.

It belongs to the amino acid-polyamine-organocation (APC) superfamily. Cationic amino acid transporter (CAT) (TC 2.A.3.3) family. N-glycosylated. In terms of tissue distribution, highly expressed in brain.

The protein resides in the cell membrane. The enzyme catalyses L-arginine(in) = L-arginine(out). It catalyses the reaction L-lysine(in) = L-lysine(out). It carries out the reaction L-ornithine(in) = L-ornithine(out). Its activity is regulated as follows. Inhibited by high potassium ions-induced membrane depolarization. Functionally, uniporter that mediates the uptake of cationic L-amino acids such as L-arginine, L-lysine and L-ornithine. The transport is sodium ions- and pH-independent, moderately trans-stimulated and is mediated by passive diffusion. In Rattus norvegicus (Rat), this protein is Cationic amino acid transporter 3.